The following is a 313-amino-acid chain: Aspartate carbamoyltransferase catalytic subunit (313 aa).

R58 and T59 together coordinate carbamoyl phosphate. K86 contributes to the L-aspartate binding site. Residues R108, H136, and Q139 each contribute to the carbamoyl phosphate site. L-aspartate contacts are provided by R169 and R223. The carbamoyl phosphate site is built by G264 and P265.

Belongs to the aspartate/ornithine carbamoyltransferase superfamily. ATCase family. As to quaternary structure, heterododecamer (2C3:3R2) of six catalytic PyrB chains organized as two trimers (C3), and six regulatory PyrI chains organized as three dimers (R2).

The catalysed reaction is carbamoyl phosphate + L-aspartate = N-carbamoyl-L-aspartate + phosphate + H(+). It participates in pyrimidine metabolism; UMP biosynthesis via de novo pathway; (S)-dihydroorotate from bicarbonate: step 2/3. Catalyzes the condensation of carbamoyl phosphate and aspartate to form carbamoyl aspartate and inorganic phosphate, the committed step in the de novo pyrimidine nucleotide biosynthesis pathway. The polypeptide is Aspartate carbamoyltransferase catalytic subunit (Chlorobium luteolum (strain DSM 273 / BCRC 81028 / 2530) (Pelodictyon luteolum)).